The sequence spans 119 residues: MARLVVVALLVLLCLSGLEAIQHAPKIQVYSRHPAENGKPNFLNCYVSGFHPSDIEVDLLKNGKKIEKVEHSDLSFSKDWSFYLLYYTEFTPNDKDEYACRVSDVTFTAPKTVKWDRNM.

The signal sequence occupies residues 1–20; the sequence is MARLVVVALLVLLCLSGLEA. Residues 25–114 enclose the Ig-like C1-type domain; it reads PKIQVYSRHP…VTFTAPKTVK (90 aa). An intrachain disulfide couples Cys45 to Cys100.

It belongs to the beta-2-microglobulin family. Heterodimer of an alpha chain and a beta chain. Beta-2-microglobulin is the beta-chain of major histocompatibility complex class I molecules.

The protein localises to the secreted. Component of the class I major histocompatibility complex (MHC). Involved in the presentation of peptide antigens to the immune system. This Chiropotes satanas (Brown-bearded saki) protein is Beta-2-microglobulin (B2M).